The sequence spans 429 residues: Glucose-1-phosphate adenylyltransferase (429 aa).

Residues Gly162, 177–178 (EK), and Ser209 each bind alpha-D-glucose 1-phosphate.

The protein belongs to the bacterial/plant glucose-1-phosphate adenylyltransferase family. Homotetramer.

It carries out the reaction alpha-D-glucose 1-phosphate + ATP + H(+) = ADP-alpha-D-glucose + diphosphate. It participates in glycan biosynthesis; glycogen biosynthesis. In terms of biological role, involved in the biosynthesis of ADP-glucose, a building block required for the elongation reactions to produce glycogen. Catalyzes the reaction between ATP and alpha-D-glucose 1-phosphate (G1P) to produce pyrophosphate and ADP-Glc. In Rippkaea orientalis (strain PCC 8801 / RF-1) (Cyanothece sp. (strain PCC 8801)), this protein is Glucose-1-phosphate adenylyltransferase.